Consider the following 501-residue polypeptide: Glycogenin-2 (501 aa).

Residues leucine 42, threonine 44, asparagine 45, tyrosine 48, and arginine 110 each coordinate UDP. UDP-alpha-D-glucose contacts are provided by leucine 42, threonine 44, asparagine 45, tyrosine 48, arginine 110, lysine 119, aspartate 135, alanine 136, aspartate 137, asparagine 166, serine 167, aspartate 193, aspartate 196, and glutamine 197. UDP is bound by residues aspartate 135, alanine 136, and aspartate 137. Aspartate 135 contributes to the Mn(2+) binding site. Aspartate 137 contacts Mn(2+). Tyrosine 228 carries O-linked (Glc...) tyrosine glycosylation. UDP is bound by residues histidine 245, glycine 248, and lysine 251. Histidine 245 is a binding site for Mn(2+). Glycine 248 and lysine 251 together coordinate UDP-alpha-D-glucose. Serine 368, serine 399, and serine 459 each carry phosphoserine.

In terms of assembly, homodimer, tightly complexed to glycogen synthase. Mn(2+) serves as cofactor. In terms of processing, self-glycosylated by the transfer of glucose residues from UDP-glucose to itself, forming an alpha-1,4-glycan of around 10 residues attached to Tyr-228. Detected in liver (at protein level). Expressed preferentially in liver, heart, and pancreas.

The protein resides in the cytoplasm. Its subcellular location is the nucleus. It catalyses the reaction L-tyrosyl-[glycogenin] + UDP-alpha-D-glucose = alpha-D-glucosyl-L-tyrosyl-[glycogenin] + UDP + H(+). It carries out the reaction [1,4-alpha-D-glucosyl](n)-L-tyrosyl-[glycogenin] + UDP-alpha-D-glucose = [1,4-alpha-D-glucosyl](n+1)-L-tyrosyl-[glycogenin] + UDP + H(+). Its pathway is glycan biosynthesis; glycogen biosynthesis. Functionally, glycogenin participates in the glycogen biosynthetic process along with glycogen synthase and glycogen branching enzyme. It catalyzes the formation of a short alpha (1,4)-glucosyl chain covalently attached via a glucose 1-O-tyrosyl linkage to internal tyrosine residues and these chains act as primers for the elongation reaction catalyzed by glycogen synthase. The chain is Glycogenin-2 (GYG2) from Homo sapiens (Human).